The following is a 546-amino-acid chain: Protein FAM124A (546 aa).

Disordered stretches follow at residues 1–37 (MDPK…SELS), 286–360 (FPKP…FQRS), and 488–546 (SSSS…EFYI). A compositionally biased stretch (low complexity) spans 24-36 (SDYSHLSSTSSEL). The segment covering 286–302 (FPKPGRVHHASEKKRHS) has biased composition (basic residues). Polar residues-rich tracts occupy residues 304–324 (PLPS…SPLN) and 347–360 (ANST…FQRS). The span at 488–511 (SSSSATARAAPPAPSTSTLTDSSP) shows a compositional bias: low complexity.

The protein belongs to the FAM124 family.

This Homo sapiens (Human) protein is Protein FAM124A (FAM124A).